The sequence spans 140 residues: MAMTMHVDIVSAEGEIFSGQAELVVAPGQEGEVGIAARHAPFLSPLKPGEVRVKSEGQEPLSFYVSGGMLEVQPYLVTILSETAVRAKDIDEAAAQEAKRAAEEALADRSGRMEYAKAQAQLAEAVAQLRTLENYRKGRA.

The protein belongs to the ATPase epsilon chain family. In terms of assembly, F-type ATPases have 2 components, CF(1) - the catalytic core - and CF(0) - the membrane proton channel. CF(1) has five subunits: alpha(3), beta(3), gamma(1), delta(1), epsilon(1). CF(0) has three main subunits: a, b and c.

It is found in the cell inner membrane. Functionally, produces ATP from ADP in the presence of a proton gradient across the membrane. In Methylococcus capsulatus (strain ATCC 33009 / NCIMB 11132 / Bath), this protein is ATP synthase epsilon chain 1.